A 137-amino-acid chain; its full sequence is uncharacterized protein (137 aa).

This is an uncharacterized protein from Acidianus convivator (ATV).